Consider the following 189-residue polypeptide: Vacuolar iron transporter homolog 2 (189 aa).

At 1–10 the chain is on the cytoplasmic side; the sequence is MARAQWLRAA. The helical transmembrane segment at 11–31 threads the bilayer; that stretch reads VLGANDGLVSVASLMIGIGAV. The Vacuolar portion of the chain corresponds to 32–38; sequence NENNKAM. The chain crosses the membrane as a helical span at residues 39-59; sequence LVSGLAGLVAGACSMAIGEFV. Topologically, residues 60–97 are cytoplasmic; it reads SVYAQYDIEVTQIERDGDIDGADAAAAREKLPSPTQAA. The helical transmembrane segment at 98–118 threads the bilayer; that stretch reads FASALAFAIGGLLPLLTSGFI. The Vacuolar portion of the chain corresponds to 119-124; the sequence is KPWGPR. Residues 125–145 form a helical membrane-spanning segment; the sequence is VGVVCAASSVGLAGFGAAGGY. The Cytoplasmic segment spans residues 146 to 159; that stretch reads LGGANMVRSGTRVL. A helical transmembrane segment spans residues 160–180; the sequence is LGGWLAMLITYAVLRLFATIF. Residues 181-189 lie on the Vacuolar side of the membrane; sequence HGMNISSSA.

This sequence belongs to the CCC1 family.

The protein localises to the vacuole membrane. The catalysed reaction is Fe(2+)(in) = Fe(2+)(out). Probable vacuolar iron transporter that may be involved in the regulation of iron distribution throughout the plant. The sequence is that of Vacuolar iron transporter homolog 2 from Oryza sativa subsp. japonica (Rice).